The chain runs to 117 residues: Large ribosomal subunit protein bL17 (117 aa).

Belongs to the bacterial ribosomal protein bL17 family. As to quaternary structure, part of the 50S ribosomal subunit. Contacts protein L32.

In Dehalococcoides mccartyi (strain ATCC BAA-2100 / JCM 16839 / KCTC 5957 / BAV1), this protein is Large ribosomal subunit protein bL17.